The primary structure comprises 873 residues: Ectonucleotide pyrophosphatase/phosphodiesterase family member 3 (873 aa).

Residues 1–11 (MESMLTLAMEQ) are Cytoplasmic-facing. Residues 12 to 30 (PVKRNTLKKYKIACIVLLA) traverse the membrane as a helical; Signal-anchor for type II membrane protein segment. At 31-873 (LLVIVSLGLG…TYLPTFETTI (843 aa)) the chain is on the extracellular side. 2 consecutive SMB domains span residues 51–93 (QGSC…VEST) and 94–138 (RIWM…GETS). Cystine bridges form between Cys-54–Cys-71, Cys-58–Cys-89, Cys-69–Cys-82, Cys-75–Cys-81, Cys-98–Cys-115, Cys-103–Cys-133, Cys-113–Cys-126, Cys-119–Cys-125, Cys-144–Cys-190, and Cys-152–Cys-364. Residues 78–80 (RGD) carry the Cell attachment site motif. The tract at residues 160-544 (PVILFSMDGF…HGSLNHLLKV (385 aa)) is phosphodiesterase. Residue Asp-167 participates in Zn(2+) binding. Residue Lys-204 coordinates ATP. Zn(2+) is bound at residue Thr-205. Residue Thr-205 is the Nucleophile of the active site. Asn-226 serves as a coordination point for ATP. A glycan (N-linked (GlcNAc...) asparagine) is linked at Asn-236. Residue Glu-275 coordinates ATP. An N-linked (GlcNAc...) asparagine glycan is attached at Asn-279. Tyr-289 contacts ATP. N-linked (GlcNAc...) asparagine glycosylation is present at Asn-290. The Zn(2+) site is built by Asp-325, His-329, Asp-372, and His-373. Disulfide bonds link Cys-380–Cys-477, Cys-428–Cys-816, Cys-561–Cys-621, Cys-573–Cys-677, Cys-575–Cys-662, and Cys-785–Cys-795. Asn-425 carries N-linked (GlcNAc...) asparagine glycosylation. His-482 contacts Zn(2+). Residues Asn-532, Asn-592, Asn-685, and Asn-697 are each glycosylated (N-linked (GlcNAc...) asparagine). A nuclease region spans residues 580–873 (NSIQLEQVNQ…TYLPTFETTI (294 aa)). Residues Asp-750, Asn-752, Asp-754, His-756, and Asp-758 each coordinate Ca(2+). The N-linked (GlcNAc...) asparagine glycan is linked to Asn-787.

Monomer and homodimer. Zn(2+) serves as cofactor. N-glycosylated. N-glycosylation is necessary for normal transport to the cell membrane, but is not the apical targeting signal.

The protein localises to the cell membrane. Its subcellular location is the apical cell membrane. It is found in the secreted. It carries out the reaction a ribonucleoside 5'-triphosphate + H2O = a ribonucleoside 5'-phosphate + diphosphate + H(+). The catalysed reaction is ATP + H2O = AMP + diphosphate + H(+). The enzyme catalyses CTP + H2O = CMP + diphosphate + H(+). It catalyses the reaction GTP + H2O = GMP + diphosphate + H(+). It carries out the reaction UTP + H2O = UMP + diphosphate + H(+). The catalysed reaction is UDP-N-acetyl-alpha-D-glucosamine + H2O = N-acetyl-alpha-D-glucosamine 1-phosphate + UMP + 2 H(+). The enzyme catalyses P(1),P(3)-bis(5'-adenosyl) triphosphate + H2O = AMP + ADP + 2 H(+). It catalyses the reaction P(1),P(4)-bis(5'-adenosyl) tetraphosphate + H2O = AMP + ATP + 2 H(+). It carries out the reaction P(1),P(5)-bis(5'-adenosyl) pentaphosphate + H2O = adenosine 5'-tetraphosphate + AMP + 2 H(+). The catalysed reaction is P(1),P(4)-bis(5'-guanosyl) tetraphosphate + H2O = GMP + GTP + 2 H(+). The enzyme catalyses Hydrolytically removes 5'-nucleotides successively from the 3'-hydroxy termini of 3'-hydroxy-terminated oligonucleotides.. Its function is as follows. Hydrolase that metabolizes extracellular nucleotides, including ATP, GTP, UTP and CTP. Limits mast cells and basophils response during inflammation and during the chronic phases of allergic responses by eliminating extracellular ATP, a signaling molecule activating these cells in an autocrine manner. Metabolizes extracellular ATP in the lumen of the small intestine, and thereby prevents ATP-induced apoptosis of intestinal plasmacytoid dendritic cells. Has a broad specificity and can also hydrolyze UDP-GlcNAc into UMP and GlcNAc-1-phosphate and potentially several other intracellular nucleotide sugars, including UDP-GalNAc, CMP-NeuAc, GDP-Fuc, and UDP-GlcA. Thereby, could modulate glycan biosynthesis and protein glycosylation. Can hydrolyze extracellular dinucleoside polyphosphates, including the vasoactive adenosine polyphosphates as well. In addition, displays an alkaline phosphodiesterase activity in vitro. The sequence is that of Ectonucleotide pyrophosphatase/phosphodiesterase family member 3 from Pongo abelii (Sumatran orangutan).